Reading from the N-terminus, the 352-residue chain is UDP-N-acetylglucosamine--N-acetylmuramyl-(pentapeptide) pyrophosphoryl-undecaprenol N-acetylglucosamine transferase (352 aa).

UDP-N-acetyl-alpha-D-glucosamine contacts are provided by residues 14–16 (TGG), asparagine 124, arginine 164, serine 185, and glutamine 285.

Belongs to the glycosyltransferase 28 family. MurG subfamily.

The protein resides in the cell inner membrane. It catalyses the reaction di-trans,octa-cis-undecaprenyl diphospho-N-acetyl-alpha-D-muramoyl-L-alanyl-D-glutamyl-meso-2,6-diaminopimeloyl-D-alanyl-D-alanine + UDP-N-acetyl-alpha-D-glucosamine = di-trans,octa-cis-undecaprenyl diphospho-[N-acetyl-alpha-D-glucosaminyl-(1-&gt;4)]-N-acetyl-alpha-D-muramoyl-L-alanyl-D-glutamyl-meso-2,6-diaminopimeloyl-D-alanyl-D-alanine + UDP + H(+). It functions in the pathway cell wall biogenesis; peptidoglycan biosynthesis. Cell wall formation. Catalyzes the transfer of a GlcNAc subunit on undecaprenyl-pyrophosphoryl-MurNAc-pentapeptide (lipid intermediate I) to form undecaprenyl-pyrophosphoryl-MurNAc-(pentapeptide)GlcNAc (lipid intermediate II). This chain is UDP-N-acetylglucosamine--N-acetylmuramyl-(pentapeptide) pyrophosphoryl-undecaprenol N-acetylglucosamine transferase, found in Chlamydia trachomatis serovar L2 (strain ATCC VR-902B / DSM 19102 / 434/Bu).